The chain runs to 219 residues: Phosphatidylinositol phosphate synthase (219 aa).

29-32 lines the a CDP-1,2-diacyl-sn-glycerol pocket; that stretch reads NQLT. 2 helical membrane-spanning segments follow: residues 31–47 and 53–72; these read LTLV…LLLI and IWAA…DGTV. Mg(2+) contacts are provided by D66 and D69. A CDP-1,2-diacyl-sn-glycerol-binding residues include G70, R74, and T80. The Mg(2+) site is built by D87 and D91. The active-site Proton acceptor is D91. The next 4 helical transmembrane spans lie at 93 to 110, 116 to 133, 154 to 171, and 177 to 194; these read ITDG…VYSY, LVAA…ISYV, RLIV…GVPY, and LWAL…RLVM.

The protein belongs to the CDP-alcohol phosphatidyltransferase class-I family. Homodimer. Mg(2+) is required as a cofactor.

The protein localises to the cell membrane. It catalyses the reaction a CDP-1,2-diacyl-sn-glycerol + 1D-myo-inositol 3-phosphate = a 1,2-diacyl-sn-glycero-3-phospho-(1D-myo-inositol-3-phosphate) + CMP + H(+). It carries out the reaction 1,2-di-(9Z-octadecenoyl)-sn-glycero-3-cytidine-5'-diphosphate + 1D-myo-inositol 3-phosphate = 1,2-di-(9Z-octadecenoyl)-sn-glycero-3-phospho-(1D-myo-inositol-3-phosphate) + CMP + H(+). It functions in the pathway phospholipid metabolism; phosphatidylinositol phosphate biosynthesis. In terms of biological role, catalyzes the conjugation of the 1'-hydroxyl group of D-myo-inositol-3-phosphate (also named L-myo-inositol-1-phosphate) with a lipid tail of cytidine diphosphate diacylglycerol (CDP-DAG), forming phosphatidylinositol phosphate (PIP) and CMP. PIP is a precursor of phosphatidylinositol (PI) which is an essential lipid required for cell wall formation. The sequence is that of Phosphatidylinositol phosphate synthase from Corynebacterium glutamicum (strain ATCC 13032 / DSM 20300 / JCM 1318 / BCRC 11384 / CCUG 27702 / LMG 3730 / NBRC 12168 / NCIMB 10025 / NRRL B-2784 / 534).